Here is a 621-residue protein sequence, read N- to C-terminus: Pentatricopeptide repeat-containing protein At3g48250, chloroplastic (621 aa).

A chloroplast-targeting transit peptide spans 1 to 67 (MYRSMAILSS…SKPDSMLQLV (67 aa)). PPR repeat units follow at residues 122 to 156 (STPL…GFYL), 157 to 194 (DEDT…NAMS), 262 to 296 (STVT…GYDM), 297 to 331 (DLDT…PFKP), 332 to 368 (SIQD…GKSL), 369 to 403 (SKAV…GYEP), 404 to 438 (DNIT…GCFP), 439 to 473 (DIKT…GFDI), 474 to 509 (DSNL…NVKP), and 510 to 544 (WQST…NYPA).

This sequence belongs to the PPR family. P subfamily.

It localises to the plastid. The protein localises to the chloroplast. The chain is Pentatricopeptide repeat-containing protein At3g48250, chloroplastic from Arabidopsis thaliana (Mouse-ear cress).